Here is a 364-residue protein sequence, read N- to C-terminus: Probable protein disulfide-isomerase A6 (364 aa).

Positions 1-28 (MKMEMHQIWSRIALASFAFAILFVSVSA) are cleaved as a signal peptide. Thioredoxin domains follow at residues 29 to 137 (DDVV…TEGG) and 139 to 256 (NVKI…EKSG). Residues Cys-58, Cys-61, Cys-177, and Cys-180 each act as nucleophile in the active site. 2 disulfides stabilise this stretch: Cys-58–Cys-61 and Cys-177–Cys-180.

This sequence belongs to the protein disulfide isomerase family.

It localises to the endoplasmic reticulum lumen. The enzyme catalyses Catalyzes the rearrangement of -S-S- bonds in proteins.. This Medicago sativa (Alfalfa) protein is Probable protein disulfide-isomerase A6.